The chain runs to 519 residues: MGLDWPQAWLLGLPIAVVYGSLALFTSILHNVFLLYYVDTFVSVYKINKVSFWVGETVFLLWNSFNDPLFGWLSDRQLLSSQPRSGAGLSSRDVVLTRVRALGWHGPLLALSFLAFWVPWAPAGLQFLLCLCLYDGFLTLVDLHHHALLADLALSSHDRTHLNFYCSLFSAAGSLSVFASYAFWNKEDFSSFRAFCVVLAAGSGLGFLGTTQLLKRQIEATRRDRGCPGLDLDGGVCEEEPPVGGEEAGNITLGQYLRQLARHQNFLWFVGMDLVQVFHCHFNSNFFPLFLEHLLSDHISLSTGSFLLGISYVAPHLNNLYFLPLCRRWGVYAVVRGLFLLKLSLSLLMLLAGPDHPGLLCFFIASNRVFTEGTCKLLTLVVTDLVDEDLVLNHRKQAASALLFGMVALVTKPGQTFAPLLGTWLLCFYTGHDLFQQSPMTPVGSVRPWPELPAPAPAPAQAPTLRQGCFYLLVFVPITCALLQLFTWSQFTLHGRRLRTVKAQRQNLAQIHTLNIKMV.

Topologically, residues 1–11 (MGLDWPQAWLL) are extracellular. The chain crosses the membrane as a helical span at residues 12-43 (GLPIAVVYGSLALFTSILHNVFLLYYVDTFVS). Residues 44–55 (VYKINKVSFWVG) lie on the Cytoplasmic side of the membrane. Residues 56-74 (ETVFLLWNSFNDPLFGWLS) traverse the membrane as a helical segment. The Extracellular portion of the chain corresponds to 75–100 (DRQLLSSQPRSGAGLSSRDVVLTRVR). Residues 101 to 118 (ALGWHGPLLALSFLAFWV) traverse the membrane as a helical segment. The Cytoplasmic portion of the chain corresponds to 119–126 (PWAPAGLQ). A helical membrane pass occupies residues 127–151 (FLLCLCLYDGFLTLVDLHHHALLAD). The Extracellular portion of the chain corresponds to 152 to 155 (LALS). Residues 156 to 179 (SHDRTHLNFYCSLFSAAGSLSVFA) traverse the membrane as a helical segment. The Cytoplasmic segment spans residues 180–191 (SYAFWNKEDFSS). A helical transmembrane segment spans residues 192–223 (FRAFCVVLAAGSGLGFLGTTQLLKRQIEATRR). Residues 224-264 (DRGCPGLDLDGGVCEEEPPVGGEEAGNITLGQYLRQLARHQ) are Extracellular-facing. Asn250 carries N-linked (GlcNAc...) asparagine glycosylation. The chain crosses the membrane as a helical span at residues 265 to 292 (NFLWFVGMDLVQVFHCHFNSNFFPLFLE). Residues 293-305 (HLLSDHISLSTGS) are Cytoplasmic-facing. Residues 306–325 (FLLGISYVAPHLNNLYFLPL) traverse the membrane as a helical segment. Residues 326 to 330 (CRRWG) lie on the Extracellular side of the membrane. Residues 331-350 (VYAVVRGLFLLKLSLSLLML) traverse the membrane as a helical segment. The Cytoplasmic segment spans residues 351–358 (LAGPDHPG). The chain crosses the membrane as a helical span at residues 359-393 (LLCFFIASNRVFTEGTCKLLTLVVTDLVDEDLVLN). At 394-402 (HRKQAASAL) the chain is on the extracellular side. A helical transmembrane segment spans residues 403–429 (LFGMVALVTKPGQTFAPLLGTWLLCFY). The Cytoplasmic portion of the chain corresponds to 430–468 (TGHDLFQQSPMTPVGSVRPWPELPAPAPAPAQAPTLRQG). Residues 469–487 (CFYLLVFVPITCALLQLFT) traverse the membrane as a helical segment. Over 488 to 519 (WSQFTLHGRRLRTVKAQRQNLAQIHTLNIKMV) the chain is Extracellular.

It localises to the cell membrane. This is Transmembrane protein 180 from Mus musculus (Mouse).